A 381-amino-acid polypeptide reads, in one-letter code: MTVDDTGSGADGDGRVDPEPAPDSADPGEDPLALRLEGLILGAERRYTPFQAARSAGVSMELASRFWRAMGFADIGQAKALTEADVLALRRLAGLVEAGLLSEAMAVQVARSTGQTTARLAEWQIDSFLEGLTEPPEPGMTRTEVTYPIVELLLPELQEFLVYVWRRQLAASAGRVIQAGDDEEMVDRRLAVGFADLVGFTRLTRRMEEEELGELVEAFETTSADLVAARGGRLVKTLGDEVLYAADDAGTAAEIALLLVETMAHDETMPELRVGIAFGTVTTRMGDVFGTTVNLASRLTSIAPKDAVLVDTAFAEELIRTRDAPASEAAAAEEAAAAEKEGEEPPVYRFALQPMWQRPVRGLGVVEPWLLTRRDGGGGEA.

The interval 1-30 (MTVDDTGSGADGDGRVDPEPAPDSADPGED) is disordered. The Guanylate cyclase domain occupies 191-300 (AVGFADLVGF…TTVNLASRLT (110 aa)). Asp-196 and Asp-240 together coordinate Mg(2+).

The protein belongs to the adenylyl cyclase class-3 family. Mg(2+) is required as a cofactor.

The enzyme catalyses ATP = 3',5'-cyclic AMP + diphosphate. The polypeptide is Adenylate cyclase (cya) (Streptomyces coelicolor (strain ATCC BAA-471 / A3(2) / M145)).